A 312-amino-acid chain; its full sequence is Malate dehydrogenase (312 aa).

NAD(+)-binding positions include 7 to 13 (GAAGGIG) and aspartate 34. Substrate is bound by residues arginine 81 and arginine 87. NAD(+)-binding positions include asparagine 94 and 117–119 (ITN). 2 residues coordinate substrate: asparagine 119 and arginine 153. Histidine 177 (proton acceptor) is an active-site residue. Methionine 227 is an NAD(+) binding site.

The protein belongs to the LDH/MDH superfamily. MDH type 1 family. Homodimer.

It carries out the reaction (S)-malate + NAD(+) = oxaloacetate + NADH + H(+). Its function is as follows. Catalyzes the reversible oxidation of malate to oxaloacetate. The chain is Malate dehydrogenase from Pectobacterium carotovorum subsp. carotovorum (strain PC1).